The sequence spans 177 residues: MIDDDGYRPNVGIVICNRQGQVLWARRYGQNSWQFPQGGINAGETAEQAMYRELFEEVGLGRKDVKILASTRNWLRYKLPKRLVRWDTKPVCIGQKQRWFLLQLQCSEAEINMQRSNTPEFDGWRWVSYWYPVRQVVSFKRDVYRRVMKEFSSVVMSLQESVAQGGRSAPGYRRKRG.

The Nudix hydrolase domain occupies 6–149 (GYRPNVGIVI…KRDVYRRVMK (144 aa)). The Nudix box motif lies at 38–59 (GGINAGETAEQAMYRELFEEVG).

It belongs to the Nudix hydrolase family. RppH subfamily. Requires a divalent metal cation as cofactor.

Functionally, accelerates the degradation of transcripts by removing pyrophosphate from the 5'-end of triphosphorylated RNA, leading to a more labile monophosphorylated state that can stimulate subsequent ribonuclease cleavage. In Edwardsiella ictaluri (strain 93-146), this protein is RNA pyrophosphohydrolase.